The sequence spans 673 residues: Vasorin (673 aa).

The first 24 residues, 1–24, serve as a signal peptide directing secretion; the sequence is MHSRSCLPPLLLLLLVLLGSGVQG. The 29-residue stretch at 25 to 53 folds into the LRRNT domain; that stretch reads CPSGCQCNQPQTVFCTARQGTTVPRDVPP. The Extracellular portion of the chain corresponds to 25-576; it reads CPSGCQCNQP…VTQAREGNLP (552 aa). LRR repeat units lie at residues 54–75, 78–99, 102–123, 126–147, 150–170, 171–192, 194–215, 218–239, 241–265, and 266–288; these read DTVGLYIFENGITTLDVGCFAG, GLQLLDLSQNQITSLPGGIFQP, NLSNLDLTANKLHEISNETFRG, RLERLYLGKNRIRHIQPGAFDA, RLLELKLPDNELRVLPPLHLP, RLLLLDLSHNSIPALEAGILDT, NVEALRLAGLGLRQLDEGLFGR, NLHDLDVSDNQLEHMPSVIQGL, GLTRLRLAGNTRIAQIRPEDLAGLT, and ALQELDVSNLSLQALPSDLSSLF. Asn102 and Asn118 each carry an N-linked (GlcNAc...) asparagine glycan. Asn274 carries N-linked (GlcNAc...) asparagine glycosylation. Positions 299–352 constitute an LRRCT domain; that stretch reads NPFNCLCPLSWFGPWVRENHVVLASPEETRCHFPPKNAGRLLLDLDYADFGCPV. A disordered region spans residues 369–389; the sequence is PTLSTSSQAPTWPSLTEPTTQ. Positions 370-389 are enriched in polar residues; the sequence is TLSTSSQAPTWPSLTEPTTQ. An EGF-like domain is found at 406-443; sequence QPQDCPASICLNGGSCRLGARHHWECLCPEGFIGLYCE. Disulfide bonds link Cys410–Cys421, Cys415–Cys431, and Cys433–Cys442. The region spanning 463 to 559 is the Fibronectin type-III domain; it reads PLLPLSIEPV…ACGEANTSQA (97 aa). N-linked (GlcNAc...) asparagine glycans are attached at residues Asn501, Asn529, and Asn555. Residues 577–597 traverse the membrane as a helical segment; that stretch reads LLIAPALAAVLLAVLAAAGAA. Residues 598-673 lie on the Cytoplasmic side of the membrane; it reads YCVRRARATS…QGVLPAKHYI (76 aa). The disordered stretch occupies residues 608-648; it reads TAQDKGQVGPGTGPLELEGVKAPLEPGSKATEGGGEALSGG.

In terms of assembly, interacts with TGFB1, TGFB2 and TGFB3. Post-translationally, N-glycosylated.

It localises to the membrane. May act as an inhibitor of TGF-beta signaling. This Mus musculus (Mouse) protein is Vasorin (Vasn).